Here is a 403-residue protein sequence, read N- to C-terminus: Phosphoglycerate kinase (403 aa).

Residues aspartate 22–asparagine 24, arginine 37, histidine 60–arginine 63, arginine 119, and arginine 156 contribute to the substrate site. Residues lysine 206, glycine 302, glutamate 333, and glycine 359 to serine 362 each bind ATP.

The protein belongs to the phosphoglycerate kinase family. In terms of assembly, monomer.

The protein resides in the cytoplasm. The enzyme catalyses (2R)-3-phosphoglycerate + ATP = (2R)-3-phospho-glyceroyl phosphate + ADP. It participates in carbohydrate degradation; glycolysis; pyruvate from D-glyceraldehyde 3-phosphate: step 2/5. The chain is Phosphoglycerate kinase (pgk) from Streptomyces coelicolor (strain ATCC BAA-471 / A3(2) / M145).